The sequence spans 220 residues: IQ domain-containing protein F3 (220 aa).

The segment covering 1–22 (MELDQDQKVETPEAAENGKDEM) has biased composition (basic and acidic residues). A disordered region spans residues 1 to 81 (MELDQDQKVE…KQIQDEKTGI (81 aa)). Acidic residues predominate over residues 23-50 (QLEEQTQDEDTTETETETETETEAEAEG). Positions 69-93 (QAEKQIQDEKTGIKEADRAIQEQTQ) form a coiled coil. The 30-residue stretch at 146–175 (AELAGVKIQAWWRGTLVRRTLLLAILSAWT) folds into the IQ domain.

This Rattus norvegicus (Rat) protein is IQ domain-containing protein F3 (Iqcf3).